A 514-amino-acid chain; its full sequence is GMP synthase [glutamine-hydrolyzing] (514 aa).

The region spanning Lys9–Asp199 is the Glutamine amidotransferase type-1 domain. The active-site Nucleophile is the Cys86. Catalysis depends on residues His173 and Glu175. The GMPS ATP-PPase domain occupies Trp200–Arg389. Ser227–Ser233 contacts ATP.

Homodimer.

The catalysed reaction is XMP + L-glutamine + ATP + H2O = GMP + L-glutamate + AMP + diphosphate + 2 H(+). It participates in purine metabolism; GMP biosynthesis; GMP from XMP (L-Gln route): step 1/1. Catalyzes the synthesis of GMP from XMP. The chain is GMP synthase [glutamine-hydrolyzing] from Listeria monocytogenes serotype 4b (strain F2365).